Consider the following 1483-residue polypeptide: MNQIEIQELTTHLSQALDQNYDVVNMDAVLCVICALEGTTITKEQLEATRLAKYINQLRRRTKNEHLARRAKSLLKKWREMVGIQQTATENLAHPSQISSSQPALDLVKSPITSFITEPIAPSQQIVSDLHSNIDSAEPPLSGEHTLLHPNFSNLVNSIKDSDRHENIAITTLHTHKDRRHSHSIRSCHVASPQPIVIDHSVNSVINLTDDSTVKINEASVVIDIASDSDENDNNGSLNPKKLNSIVPAPLPIPSTPSSRQRKLKKEKRSKEREGQVATNTRFGAKASDGFQQAALTTDSEIFSLSNSSMSSIVSGDATSSYSQNKSRLNSNELTFTGRFKAVDHLFRSTESGKHKIDEYSAYDSNASCSRLSPSTVDEVKKAEHLFDAQLTNTTANQIPMSAVSIGYESNTRHEYLESDSPSQIPKRRGRKKGSKGVDALIAKESSSLSQQIFFGGSTVKKVKTTKELFNEIQSRKLSVSMQSSASNLSNSSTNRDLPSHTTFPRQTSSCSDTSMNSPHILETLSGSAIFASKIDDLGNTDSDTVTSDPSHDSNKSQEIKECTSLDSNSNSIQSLPLANNRENLIPTNVNDITTQLMHLIHSLNSPLSEIEIERVYQEKIIPCTCIVIEGVQGTLGESNNSTLDEQSYNAKISLNSKDNLSCHNQDNYSTSQRSVNGEVIDTQPKLVKSIFDLDFDDNDDPLYFIMDEIQKPIARADELKNNKSDTKNINFGASAQNASLNIIHFNDDAQQDNSNQERGKNETQNAIPAFTVHEDPDCLARQRFYIQTNKVTSFHINALHNYYIPNINGNWDSVESFTSFQSEHTIMDTMESYTVTNGADVVPKYGLLTSDRIRKDLSSLKSIKPYRVKNFTSLISPFLGVAKCLPTCRRARRRFKNFVNSSTANDKISNNFESLENMKTSFKNCNPLNVKIDGTTSAIYSHNENHVPMQVNTNVEQLPPSQSFSSNAISYNLLKLADDKVCHDGISDKSSNTGCQGNSPYSSSSSSSYSGRKEDQHIITKNLQNKNIQLNSRKSDMKRRKRIYLENDSKKKKHYRKRIKTAVNRTFSNLHRNLYSIDSENGMKNDYKNEYGNSNNEEYAIVQRPAGDGENCSNHIVLTIKKTPSKINSPANSMTAFSPPSTSDGANLQKSILDLRLEDTNISQSITEIPQKKDLSKTDRIVHQSRSSAYRRIFRKPDKSQTKFIDLDLKHLFHLKANSPCISANAKLHNKLFFPHELSRDNTSGIRERLINYSSSSSSSYDDDSEVENTSFLKKANVNKFSASNNRNLKTETETCAATAISEFKFESDEDSILTSLGDSDIDIQDEIQVINDKVDYCNDFQNNKMLESFNSIFVDSLRTNTKNASDNMGSSAHITSLESLKPENADAITRYCNNNNLGVNLSNELSNISAKPLKSFDSTMKLPSLGIEHCTGIKTSSDMASTNIAEKKLTRIQQFKEWHQVLQLRSYNNEPLIVLPYVLLE.

One can recognise a TFIIS N-terminal domain in the interval 8-85; sequence ELTTHLSQAL…KKWREMVGIQ (78 aa). Residues S204, S258, and S421 each carry the phosphoserine modification. Disordered regions lie at residues 227-278, 414-438, 480-518, 541-575, and 989-1041; these read SDSD…GQVA, HEYLESDSPSQIPKRRGRKKGSKGV, VSMQSSASNLSNSSTNRDLPSHTTFPRQTSSCSDTSMNS, TDSDTVTSDPSHDSNKSQEIKECTSLDSNSNSIQS, and DKSS…MKRR. Residues 426 to 435 show a composition bias toward basic residues; sequence PKRRGRKKGS. A compositionally biased stretch (low complexity) spans 480–495; it reads VSMQSSASNLSNSSTN. Polar residues predominate over residues 496–518; the sequence is RDLPSHTTFPRQTSSCSDTSMNS. Phosphothreonine is present on T541. The span at 550-564 shows a compositional bias: basic and acidic residues; it reads PSHDSNKSQEIKECT. S551 carries the post-translational modification Phosphoserine. 2 stretches are compositionally biased toward polar residues: residues 565–575 and 989–999; these read SLDSNSNSIQS and DKSSNTGCQGN. Over residues 1000–1011 the composition is skewed to low complexity; the sequence is SPYSSSSSSSYS. Over residues 1020–1033 the composition is skewed to polar residues; it reads ITKNLQNKNIQLNS. S1177 bears the Phosphoserine mark. T1179 bears the Phosphothreonine mark.

Belongs to the Mediator complex subunit 26 family. Component of the Mediator complex. Interacts with MED6 and MED17.

It is found in the nucleus. Functionally, component of the Mediator complex, a coactivator involved in the regulated transcription of nearly all RNA polymerase II-dependent genes. Mediator functions as a bridge to convey information from gene-specific regulatory proteins to the basal RNA polymerase II transcription machinery. Mediator is recruited to promoters by direct interactions with regulatory proteins and serves as a scaffold for the assembly of a functional preinitiation complex with RNA polymerase II and the general transcription factors. Required for activated transcription of the MtnA gene. The sequence is that of Mediator of RNA polymerase II transcription subunit 26 (MED26) from Drosophila melanogaster (Fruit fly).